A 157-amino-acid polypeptide reads, in one-letter code: UPF0179 protein Mhun_1135 (157 aa).

The protein belongs to the UPF0179 family.

The protein is UPF0179 protein Mhun_1135 of Methanospirillum hungatei JF-1 (strain ATCC 27890 / DSM 864 / NBRC 100397 / JF-1).